The primary structure comprises 200 residues: 3-isopropylmalate dehydratase small subunit (200 aa).

The protein belongs to the LeuD family. LeuD type 1 subfamily. In terms of assembly, heterodimer of LeuC and LeuD.

The enzyme catalyses (2R,3S)-3-isopropylmalate = (2S)-2-isopropylmalate. It functions in the pathway amino-acid biosynthesis; L-leucine biosynthesis; L-leucine from 3-methyl-2-oxobutanoate: step 2/4. In terms of biological role, catalyzes the isomerization between 2-isopropylmalate and 3-isopropylmalate, via the formation of 2-isopropylmaleate. In Campylobacter jejuni subsp. jejuni serotype O:6 (strain 81116 / NCTC 11828), this protein is 3-isopropylmalate dehydratase small subunit.